The chain runs to 105 residues: Circadian clock oscillator protein KaiB (105 aa).

The protein belongs to the KaiB family. May undergo a major conformational rearrangment; in the free state forms homooligomers. When bound to KaiC switches to a monomeric thioredoxin-fold (KaiB(fs)). The active oscillator complex is probably KaiC(6):KaiB(6).

Component of the KaiBC clock protein complex, which constitutes the main circadian regulator in cyanobacteria; it may modify the ATPase activity of KaiC. In terms of biological role, may be a metamorphic protein which reversibly switches between an inactive tetrameric fold and a rare, thioredoxin-like monomeric fold (KaiB(fs)). KaiB(fs) binds phospho-KaiC, and perhaps clock output effectors. This Prochlorococcus marinus (strain MIT 9312) protein is Circadian clock oscillator protein KaiB.